The sequence spans 270 residues: Undecaprenyl-diphosphatase (270 aa).

8 helical membrane-spanning segments follow: residues 14 to 34 (GLTEVLPISSSAHLILIPTFL), 40 to 60 (GITFDVALHLGTFIALCLYFW), 88 to 108 (FYIIAGTFPAAIVGKLFETTI), 117 to 137 (SLIALFLIVFALLLAFADTSG), 146 to 166 (ITLKSAIIIGLAQCLALIPGV), 189 to 209 (FSFLLSLPIVAGAALFELSGL), 221 to 241 (PLLIGIATSAVFGYISVAFLL), and 249 to 269 (LYPFVWYRIAIGCLALVFINF).

This sequence belongs to the UppP family.

Its subcellular location is the cell inner membrane. It catalyses the reaction di-trans,octa-cis-undecaprenyl diphosphate + H2O = di-trans,octa-cis-undecaprenyl phosphate + phosphate + H(+). In terms of biological role, catalyzes the dephosphorylation of undecaprenyl diphosphate (UPP). Confers resistance to bacitracin. The chain is Undecaprenyl-diphosphatase from Geotalea daltonii (strain DSM 22248 / JCM 15807 / FRC-32) (Geobacter daltonii).